Here is a 302-residue protein sequence, read N- to C-terminus: 5'-3' exonuclease (302 aa).

In terms of domain architecture, 5'-3' exonuclease spans 173-269 (IPKLIPDLLG…NITTKKIKML (97 aa)).

Its function is as follows. 5'-3' exonuclease acting preferentially on double-stranded DNA. The chain is 5'-3' exonuclease (pol) from Buchnera aphidicola subsp. Baizongia pistaciae (strain Bp).